The sequence spans 1342 residues: MSLSPHVENASIPKGSTPIPKNRNVSSIGKGEFLGSSSSNNSSFRMNHYSNSGQPSVLDSIRRPNLTPTFSYSNGVYMPESHRTSSFNDSYLPYDKNPYAKTTGSMSNKSNMKIKTKKNAINTNTRKSSGLIYTTKVDKELSSIDKVNDPNINGLVCAGKTHLGLYKFSPSDRSIKCVHDFITPNSNTSTRGTTSLLPKLSKRTRQNKFSTIADVKTGFNNYKNCIAVCNNSTAISIYDLNKSSSIDNPLITSLCEHTRSINSFDFNMVESNLIISGGQDSCVKIWDLRSNKSKSSNRSDISINTASDSIRDVKWMPGYNFASKNDQGSSTYGNLKSGYKFASIHDSGYLLKFDLRQPAQYEKKLNAHTGPGLCLNWHPNQEYIATGGRDGKCCLWFVGDNANAAENTVLNYGNSPSLHAPNTSLNNSGSLAFPKLTINTGYPVTKLKFKPAYSSNIYNSLLGISSMGDEAEVRIYSLARKYIPKHVLLSETPSLGLVWWDENLIFNIDKGTRINGWDINKEPTVLENLSKNTTTWRDLDGNGLLSVDQEIGSYEVVEPELQPTSSTTCKKHPGTIKNPKNGNPENQGIIGGIKKGFSHTGLTSFTPERPPTLKAGPTFSTKSLTLASGASSFNSSSASLTSLTPQTENREEIAIEPPCIITLDIPQIFNNIRLTKIAHSRKKNVISESSSMKNSPVEKFKYLARQLKFSYIREHNVSDSADTAYKNDIENIDVVKNATETHGDNTTTTNNNDDGDDDDDDDDDDDKIIESHLLKKYNFPENNTWATLMNEKVNNKKSKRNSSSSREFDEKDVRSSISSISASRQSHDRSRKIDKNVEAELQEKIQTLVDLISIATHNASVYLSIDDLTNFKIWILIRDSLLWDLKWMTSSQISSDNASNMDANESSDFEAGENLKTGKEFPEEDGAGTSGAESLVEERPQAFRANSDEPSDAEKKPVSKLKEQLKNTEIIPYAQPNEDSDEVLIKLKELQNQRLESRTKMGETVSDDVIIEEDEHEHQEEEQPHDSPTKSAQFHASPIAKSIPILQKREHRKSFIDTFMLHSPNGYNGDTDIGNEDDNISLRFTYNSVSPRSKVSSLQSYATTTSQLETFKKLSSHTAPIIGSPRHAPSRPDSIGREQLSSSLTKKLAKCKKIIADPPWDTKKLIKQLYNQATETGNVVLTVNILFLFQTIYQITEIDIAKDAIAHFLLLLHRYELFGIAADVLKYCPFEDIMGSEGDQSSIRLFCERCGELITNESSKEKLRAEAQQTGNKKIMDKFGYWYCDSCKKKNTSCVLCERPLKKLTMVILPCGHEGHFQCIQEWFLDENEQECPGGCPGVAFI.

The interval 1 to 39 is disordered; sequence MSLSPHVENASIPKGSTPIPKNRNVSSIGKGEFLGSSSS. WD repeat units lie at residues 207-248, 256-296, 305-342, 367-406, 439-486, and 489-527; these read NKFS…SIDN, EHTR…SKSS, TASDSIRDVKWMPGYNFASKNDQGSSTYGNLKSGYKFA, AHTGPGLCLNWHPNQEYIATGGRDGKCCLWFVGDNANAAE, NTGY…IPKH, and LSETPSLGLVWWDENLIFNIDKGTRINGWDINKEPTVLE. 5 disordered regions span residues 559–593, 600–619, 630–651, 736–766, and 788–831; these read PELQPTSSTTCKKHPGTIKNPKNGNPENQGIIGGI, TGLTSFTPERPPTLKAGPTF, ASSFNSSSASLTSLTPQTENRE, KNATETHGDNTTTTNNNDDGDDDDDDDDDDD, and LMNE…DRSR. The segment covering 630 to 644 has biased composition (low complexity); the sequence is ASSFNSSSASLTSLT. The segment covering 753 to 766 has biased composition (acidic residues); it reads DDGDDDDDDDDDDD. A compositionally biased stretch (low complexity) spans 815-824; that stretch reads SSISSISASR. One copy of the WD 7 repeat lies at 844-884; sequence KIQTLVDLISIATHNASVYLSIDDLTNFKIWILIRDSLLWD. Disordered stretches follow at residues 942–962 and 1014–1043; these read AFRANSDEPSDAEKKPVSKLK and DEHEHQEEEQPHDSPTKSAQFHASPIAKSI. 2 stretches are compositionally biased toward basic and acidic residues: residues 952 to 962 and 1016 to 1028; these read DAEKKPVSKLK and HEHQEEEQPHDSP. Phosphoserine is present on residues S1037, S1081, S1088, S1090, S1124, and S1134. WD repeat units follow at residues 1130-1170 and 1217-1256; these read SRPD…KQLY and LFGIAADVLKYCPFEDIMGSEGDQSSIRLFCERCGELITN. The RING-type; degenerate zinc-finger motif lies at 1294-1336; it reads CVLCERPLKKLTMVILPCGHEGHFQCIQEWFLDENEQECPGGC.

It belongs to the WD repeat RTC1 family.

It localises to the vacuole. May be involved in a process influencing telomere capping. This Saccharomyces cerevisiae (strain Lalvin EC1118 / Prise de mousse) (Baker's yeast) protein is Restriction of telomere capping protein 1 (RTC1).